Here is a 450-residue protein sequence, read N- to C-terminus: Phosphoglucosamine mutase (450 aa).

Serine 102 (phosphoserine intermediate) is an active-site residue. Mg(2+) contacts are provided by serine 102, aspartate 244, aspartate 246, and aspartate 248. Serine 102 carries the post-translational modification Phosphoserine.

The protein belongs to the phosphohexose mutase family. It depends on Mg(2+) as a cofactor. Post-translationally, activated by phosphorylation.

The catalysed reaction is alpha-D-glucosamine 1-phosphate = D-glucosamine 6-phosphate. Catalyzes the conversion of glucosamine-6-phosphate to glucosamine-1-phosphate. The protein is Phosphoglucosamine mutase of Syntrophomonas wolfei subsp. wolfei (strain DSM 2245B / Goettingen).